A 322-amino-acid chain; its full sequence is MSKKIGILTSGGDAPGMNSAISFLAKSALSLGFEPYLIFDGYSGIIARKILPAKNFPYNGISSFGGTAIGSSRFPEFKKEEVQNKAVEILSEIGISSLVVVGGDGTYNGGYKLHLKGIKVIALPGTIDNDIQFTDYTIGFDTALNTIVETIDKLRDTANSHRRCFVVEVMGRHCQDLALYSAMATGSEILITNTNILTPEEVSQKVLEQFAKGKPSVIVTITENILPNLKEFAAKIEELTKISTRSLEVGHTQRGGRPSAFDRILAAKMAMKAMELINQDKSGLAISYLDGKIQTFDIAKVVSKPVRKTNDLVLEINKINQN.

ATP is bound by residues Gly12, 73–74, and 103–106; these read RF and GDGT. Mg(2+) is bound at residue Asp104. 126-128 provides a ligand contact to substrate; sequence TID. The Proton acceptor role is filled by Asp128. Residue Arg155 participates in ADP binding. Substrate is bound by residues Arg163 and 170 to 172; that span reads MGR. ADP-binding positions include 186 to 188, Lys212, and 214 to 216; these read GSE and KPS. Substrate-binding positions include Glu223, Arg245, and 251–254; that span reads HTQR.

Belongs to the phosphofructokinase type A (PFKA) family. ATP-dependent PFK group I subfamily. Prokaryotic clade 'B1' sub-subfamily. As to quaternary structure, homotetramer. Mg(2+) is required as a cofactor.

Its subcellular location is the cytoplasm. The enzyme catalyses beta-D-fructose 6-phosphate + ATP = beta-D-fructose 1,6-bisphosphate + ADP + H(+). The protein operates within carbohydrate degradation; glycolysis; D-glyceraldehyde 3-phosphate and glycerone phosphate from D-glucose: step 3/4. Its activity is regulated as follows. Allosterically activated by ADP and other diphosphonucleosides, and allosterically inhibited by phosphoenolpyruvate. In terms of biological role, catalyzes the phosphorylation of D-fructose 6-phosphate to fructose 1,6-bisphosphate by ATP, the first committing step of glycolysis. In Mesomycoplasma hyopneumoniae (strain J / ATCC 25934 / NCTC 10110) (Mycoplasma hyopneumoniae), this protein is ATP-dependent 6-phosphofructokinase.